Consider the following 122-residue polypeptide: uncharacterized protein (122 aa).

The next 2 membrane-spanning stretches (helical) occupy residues 9 to 29 (VATV…STWV) and 60 to 80 (LFSF…CLIM).

Its subcellular location is the cytoplasm. It is found in the membrane. This is an uncharacterized protein from Schizosaccharomyces pombe (strain 972 / ATCC 24843) (Fission yeast).